Consider the following 839-residue polypeptide: Small conductance calcium-activated potassium channel protein 2 (839 aa).

Disordered stretches follow at residues 1–33 (MPIV…QESP), 64–115 (QRGF…QQPG), 195–258 (ALRQ…RRES), and 280–375 (SNLS…KKNQ). Low complexity-rich tracts occupy residues 198–212 (QQYA…QYHQ) and 219–235 (ATSP…GPPL). Residues 236–253 (SHHHHHPHPAHHQHHQPQ) are compositionally biased toward basic residues. Positions 313 to 326 (SSPSAAAAASSSAP) are enriched in low complexity. Residues 345 to 363 (GTGGGGSTGGGGGGSGHGS) show a composition bias toward gly residues. The helical transmembrane segment at 398–418 (ALIFGMFGIVVMVIETELSWG) threads the bilayer. The residue at position 420 (Tyr-420) is a Phosphotyrosine. A helical membrane pass occupies residues 428–448 (LALKCLISLSTIILLGLIIVY). A helical transmembrane segment spans residues 474–494 (IFFICLEILVCAIHPIPGNYT). Residues 516-536 (IILSIPMFLRLYLIARVMLLH) traverse the membrane as a helical segment. Residues 565–585 (LMTICPGTVLLVFSISLWIIA) traverse the membrane as a helical segment. Residues 605 to 625 (FLGAMWLISITFLSIGYGDMV) constitute an intramembrane region (pore-forming). The chain crosses the membrane as a helical span at residues 634–654 (VCLLTGIMGAGCTALVVAVVA). The calmodulin-binding stretch occupies residues 672–748 (DTQLTKRVKN…LVDLAKTQNI (77 aa)). Basic and acidic residues predominate over residues 810–819 (HVSYNAERSR). Residues 810–839 (HVSYNAERSRSSSRRRRSSSTAPPTSSESS) form a disordered region. A compositionally biased stretch (low complexity) spans 828-839 (SSTAPPTSSESS).

Belongs to the potassium channel KCNN family. KCa2.2/KCNN2 subfamily. Homodimer. Heteromultimer with KCNN1 and KCNN3. The complex is composed of 4 channel subunits each of which binds to a calmodulin subunit which regulates the channel activity through calcium-binding. Interacts (via N-terminal domain) with MPP2. In terms of tissue distribution, expressed in atrial and ventricular myocytes with higher levels in atrial myocytes (at protein level). Highly expressed in brain, liver and colon with low levels in kidney and testis. In colon, detected in smooth muscle cells.

Its subcellular location is the membrane. The protein resides in the cytoplasm. It is found in the myofibril. It localises to the sarcomere. The protein localises to the z line. It catalyses the reaction K(+)(in) = K(+)(out). Its activity is regulated as follows. Inhibited by bee venom neurotoxin apamin. Inhibited by UCL 1684 and tetraethylammonium (TEA). Its function is as follows. Small conductance calcium-activated potassium channel that mediates the voltage-independent transmembrane transfer of potassium across the cell membrane through a constitutive interaction with calmodulin which binds the intracellular calcium allowing its opening. The current is characterized by a voltage-independent activation, an intracellular calcium concentration increase-dependent activation and a single-channel conductance of about 3 picosiemens. Also presents an inwardly rectifying current, thus reducing its already small outward conductance of potassium ions, which is particularly the case when the membrane potential displays positive values, above + 20 mV. The inward rectification could be due to a blockade of the outward current by intracellular divalent cations such as calcium and magnesium and could also be due to an intrinsic property of the channel pore, independent of intracellular divalent ions. There are three positively charged amino acids in the S6 transmembrane domain, close to the pore, that collectively control the conductance and rectification through an electrostatic mechanism. Additionally, electrostatic contributions from these residues also play an important role in determining the intrinsic open probability of the channel in the absence of calcium, affecting the apparent calcium affinity for activation. Forms an heteromeric complex with calmodulin, which is constitutively associated in a calcium-independent manner. Channel opening is triggered when calcium binds the calmodulin resulting in a rotary movement leading to the formation of the dimeric complex to open the gate. Plays a role in the repolarization phase of cardiac action potential. The sequence is that of Small conductance calcium-activated potassium channel protein 2 from Mus musculus (Mouse).